The sequence spans 243 residues: Orotidine 5'-phosphate decarboxylase (243 aa).

Residues aspartate 19, lysine 41, 69–78 (DLKFFDIPAT), threonine 124, arginine 185, glutamine 194, glycine 214, and arginine 215 each bind substrate. The Proton donor role is filled by lysine 71.

Belongs to the OMP decarboxylase family. Type 1 subfamily. In terms of assembly, homodimer.

The catalysed reaction is orotidine 5'-phosphate + H(+) = UMP + CO2. It functions in the pathway pyrimidine metabolism; UMP biosynthesis via de novo pathway; UMP from orotate: step 2/2. Its function is as follows. Catalyzes the decarboxylation of orotidine 5'-monophosphate (OMP) to uridine 5'-monophosphate (UMP). This Xanthomonas euvesicatoria pv. vesicatoria (strain 85-10) (Xanthomonas campestris pv. vesicatoria) protein is Orotidine 5'-phosphate decarboxylase.